We begin with the raw amino-acid sequence, 565 residues long: Periplasmic trehalase (565 aa).

An N-terminal signal peptide occupies residues 1–30 (MKSPAPSRPQKMALIPACIFLCFAALSVQA). Residues Arg-152, 159 to 160 (WD), Asn-196, 205 to 207 (RSQ), 277 to 279 (RPE), and Gly-310 each bind substrate. Residues Asp-312 and Glu-496 each act as proton donor/acceptor in the active site. Glu-511 is a substrate binding site. A disordered region spans residues 538–565 (PCDNVPATRPTVKSATTQPSTKEAQPTP). Polar residues predominate over residues 548–565 (TVKSATTQPSTKEAQPTP).

The protein belongs to the glycosyl hydrolase 37 family. In terms of assembly, monomer.

Its subcellular location is the periplasm. It catalyses the reaction alpha,alpha-trehalose + H2O = alpha-D-glucose + beta-D-glucose. Provides the cells with the ability to utilize trehalose at high osmolarity by splitting it into glucose molecules that can subsequently be taken up by the phosphotransferase-mediated uptake system. The sequence is that of Periplasmic trehalase from Escherichia coli O8 (strain IAI1).